We begin with the raw amino-acid sequence, 469 residues long: Dihydrolipoyl dehydrogenase (469 aa).

FAD is bound by residues 40–48 (EKAVLGGVC), lysine 57, and alanine 120. Cysteine 48 and cysteine 53 are joined by a disulfide. NAD(+)-binding positions include 186-190 (GGGAI), glutamate 209, and 275-278 (AVGV). Residues aspartate 317 and alanine 325 each contribute to the FAD site. Catalysis depends on histidine 450, which acts as the Proton acceptor.

The protein belongs to the class-I pyridine nucleotide-disulfide oxidoreductase family. As to quaternary structure, homodimer. It depends on FAD as a cofactor.

Its subcellular location is the cytoplasm. It carries out the reaction N(6)-[(R)-dihydrolipoyl]-L-lysyl-[protein] + NAD(+) = N(6)-[(R)-lipoyl]-L-lysyl-[protein] + NADH + H(+). Lipoamide dehydrogenase is a component of the alpha-ketoacid dehydrogenase complexes. The chain is Dihydrolipoyl dehydrogenase (lpd) from Chlorobaculum tepidum (strain ATCC 49652 / DSM 12025 / NBRC 103806 / TLS) (Chlorobium tepidum).